Here is a 67-residue protein sequence, read N- to C-terminus: Conotoxin Cal6.35 (67 aa).

The N-terminal stretch at Met1–Ala22 is a signal peptide. Cystine bridges form between Cys43-Cys53, Cys46-Cys59, and Cys52-Cys66.

It belongs to the conotoxin O1 superfamily. As to expression, expressed by the venom duct.

The protein resides in the secreted. Its function is as follows. Probable neurotoxin. The sequence is that of Conotoxin Cal6.35 from Californiconus californicus (California cone).